The sequence spans 275 residues: NH(3)-dependent NAD(+) synthetase (275 aa).

50 to 57 (GISGGVDS) lines the ATP pocket. Aspartate 56 provides a ligand contact to Mg(2+). A deamido-NAD(+)-binding site is contributed by arginine 147. ATP is bound at residue threonine 167. Residue glutamate 172 coordinates Mg(2+). Residues lysine 180 and aspartate 187 each coordinate deamido-NAD(+). Residues lysine 196 and threonine 218 each contribute to the ATP site. 267 to 268 (HK) is a binding site for deamido-NAD(+).

Belongs to the NAD synthetase family. Homodimer.

It carries out the reaction deamido-NAD(+) + NH4(+) + ATP = AMP + diphosphate + NAD(+) + H(+). It functions in the pathway cofactor biosynthesis; NAD(+) biosynthesis; NAD(+) from deamido-NAD(+) (ammonia route): step 1/1. Functionally, catalyzes the ATP-dependent amidation of deamido-NAD to form NAD. Uses ammonia as a nitrogen source. The protein is NH(3)-dependent NAD(+) synthetase of Stutzerimonas stutzeri (strain A1501) (Pseudomonas stutzeri).